The following is a 776-amino-acid chain: Glucocorticoid receptor (776 aa).

Residues 1–11 show a composition bias toward polar residues; that stretch reads MDSKESLTSPS. Residues 1–25 are disordered; sequence MDSKESLTSPSEEIPSSVHGQERGN. Residues 1-419 are modulating; that stretch reads MDSKESLTSP…LSAVGPPPKF (419 aa). Phosphothreonine is present on Thr-8. Arg-23 bears the Omega-N-methylarginine mark. Phosphoserine occurs at positions 45, 113, and 134. The disordered stretch occupies residues 157 to 178; sequence PETPSDVSSEQQNLKGQTGTNG. Residues 161-174 are compositionally biased toward polar residues; that stretch reads SDVSSEQQNLKGQT. Phosphoserine occurs at positions 203, 211, and 226. Lys-258 participates in a covalent cross-link: Glycyl lysine isopeptide (Lys-Gly) (interchain with G-Cter in SUMO2). Ser-267 carries the phosphoserine modification. Glycyl lysine isopeptide (Lys-Gly) (interchain with G-Cter in SUMO); alternate cross-links involve residues Lys-277 and Lys-293. Residues Lys-277 and Lys-293 each participate in a glycyl lysine isopeptide (Lys-Gly) (interchain with G-Cter in SUMO2); alternate cross-link. Phosphoserine is present on residues Ser-307 and Ser-404. Residues 417–492 constitute a DNA-binding region (nuclear receptor); that stretch reads PKFCLVCSDE…AGMNLEARKT (76 aa). Lys-418 participates in a covalent cross-link: Glycyl lysine isopeptide (Lys-Gly) (interchain with G-Cter in ubiquitin). 2 consecutive NR C4-type zinc fingers follow at residues 420–440 and 456–480; these read CLVC…CGSC and CAGR…YRKC. Residues Lys-479, Lys-491, Lys-493, and Lys-494 each carry the N6-acetyllysine modification. Residues 484-776 are interaction with CLOCK; the sequence is GMNLEARKTK…NIKKLLFHQK (293 aa). A hinge region spans residues 486 to 522; that stretch reads NLEARKTKKKIKGIQQTTTGISQETPENSANKTIVPA. The region spanning 523 to 757 is the NR LBD domain; the sequence is TLPQLTPTPV…FPEMLAEIIT (235 aa). Positions 531–696 are interaction with CRY1; the sequence is PVSLLEVIEP…EIRMTYIKEL (166 aa). Residue Lys-702 forms a Glycyl lysine isopeptide (Lys-Gly) (interchain with G-Cter in SUMO) linkage.

It belongs to the nuclear hormone receptor family. NR3 subfamily. Heteromultimeric cytoplasmic complex with HSP90AA1, HSPA1A/HSPA1B, and FKBP5 or another immunophilin such as PPID, STIP1, or the immunophilin homolog PPP5C. Upon ligand binding FKBP5 dissociates from the complex and FKBP4 takes its place, thereby linking the complex to dynein and mediating transport to the nucleus, where the complex dissociates. Probably forms a complex composed of chaperones HSP90 and HSP70, co-chaperones CDC37, PPP5C, TSC1 and client protein TSC2, CDK4, AKT, RAF1 and NR3C1; this complex does not contain co-chaperones STIP1/HOP and PTGES3/p23. Directly interacts with UNC45A. Binds to DNA as a homodimer, and as heterodimer with NR3C2 or the retinoid X receptor. Binds STAT5A and STAT5B homodimers and heterodimers. Interacts with NRIP1, POU2F1, POU2F2 and TRIM28. Interacts with several coactivator complexes, including the SMARCA4 complex, CREBBP/EP300, TADA2L (Ada complex) and p160 coactivators such as NCOA2 and NCOA6. Interaction with BAG1 inhibits transactivation. Interacts with HEXIM1 and TGFB1I1. Interacts with NCOA1. Interacts with NCOA3, SMARCA4, SMARCC1, SMARCD1, and SMARCE1. Interacts with CLOCK, CRY1 and CRY2 in a ligand-dependent fashion. Interacts with CIART. Interacts with RWDD3. Interacts with UBE2I/UBC9 and this interaction is enhanced in the presence of RWDD3. Interacts with GRIP1. Interacts with NR4A3 (via nuclear receptor DNA-binding domain), represses transcription activity of NR4A3 on the POMC promoter Nur response element (NurRE). Directly interacts with PNRC2 to attract and form a complex with UPF1 and DCP1A; the interaction leads to rapid mRNA degradation. Interacts with GSK3B. Interacts with FNIP1 and FNIP2. Interacts (via C-terminus) with NR3C1 (via C-terminus). Interacts with MCM3AP. Interacts (via domain NR LBD) with HSP90AA1 and HSP90AB1. In the absence of hormonal ligand, interacts with TACC1. In terms of processing, acetylation by CLOCK reduces its binding to glucocorticoid response elements and its transcriptional activity. Post-translationally, increased proteasome-mediated degradation in response to glucocorticoids. Phosphorylated in the absence of hormone; becomes hyperphosphorylated in the presence of glucocorticoid. The Ser-203, Ser-226 and Ser-404-phosphorylated forms are mainly cytoplasmic, and the Ser-211-phosphorylated form is nuclear. Phosphorylation at Ser-211 increases transcriptional activity. Phosphorylation at Ser-203, Ser-226 and Ser-404 decreases signaling capacity. Phosphorylation at Ser-404 may protect from glucocorticoid-induced apoptosis. Phosphorylation at Ser-203 and Ser-211 is not required in regulation of chromosome segregation. May be dephosphorylated by PPP5C, attenuates NR3C1 action. In terms of processing, sumoylation at Lys-277 and Lys-293 negatively regulates its transcriptional activity. Sumoylation at Lys-702 positively regulates its transcriptional activity in the presence of RWDD3. Sumoylation at Lys-277 and Lys-293 is dispensable whereas sumoylation at Lys-702 is critical for the stimulatory effect of RWDD3 on its transcriptional activity. Heat shock increases sumoylation in a RWDD3-dependent manner. Post-translationally, ubiquitinated by UBR5, leading to its degradation: UBR5 specifically recognizes and binds ligand-bound NR3C1 when it is not associated with coactivators (NCOAs). In presence of NCOAs, the UBR5-degron is not accessible, preventing its ubiquitination and degradation.

It localises to the cytoplasm. The protein localises to the nucleus. The protein resides in the mitochondrion. Its subcellular location is the cytoskeleton. It is found in the spindle. It localises to the microtubule organizing center. The protein localises to the centrosome. The protein resides in the chromosome. Its subcellular location is the nucleoplasm. In terms of biological role, receptor for glucocorticoids (GC). Has a dual mode of action: as a transcription factor that binds to glucocorticoid response elements (GRE), both for nuclear and mitochondrial DNA, and as a modulator of other transcription factors. Affects inflammatory responses, cellular proliferation and differentiation in target tissues. Involved in chromatin remodeling. Plays a role in rapid mRNA degradation by binding to the 5' UTR of target mRNAs and interacting with PNRC2 in a ligand-dependent manner which recruits the RNA helicase UPF1 and the mRNA-decapping enzyme DCP1A, leading to RNA decay. Could act as a coactivator for STAT5-dependent transcription upon growth hormone (GH) stimulation and could reveal an essential role of hepatic GR in the control of body growth. Mediates glucocorticoid-induced apoptosis. Promotes accurate chromosome segregation during mitosis. May act as a tumor suppressor. May play a negative role in adipogenesis through the regulation of lipolytic and antilipogenic gene expression. In Tupaia belangeri (Common tree shrew), this protein is Glucocorticoid receptor (NR3C1).